We begin with the raw amino-acid sequence, 292 residues long: Probable ABC transporter permease protein YurN (292 aa).

Transmembrane regions (helical) follow at residues 7–27 (IIPY…YIPI), 70–90 (VLYA…LAAV), 106–126 (VFFL…DFIY), 160–180 (VIFV…IVSI), 215–235 (FVAV…PYIL), and 260–280 (MMGY…ALSL). Residues 66–282 (LTNNVLYAVI…IITLALSLMQ (217 aa)) form the ABC transmembrane type-1 domain.

The protein belongs to the binding-protein-dependent transport system permease family. MalFG subfamily.

The protein resides in the cell membrane. Probably part of the binding-protein-dependent transport system YurMNO. Probably responsible for the translocation of the substrate across the membrane. The sequence is that of Probable ABC transporter permease protein YurN (yurN) from Bacillus subtilis (strain 168).